A 303-amino-acid polypeptide reads, in one-letter code: N-acetyl-D-glucosamine kinase (303 aa).

ATP is bound by residues 4–11 (GFDIGGTK) and 133–140 (GVGGGLVL). Zn(2+) contacts are provided by His157, Cys177, Cys179, and Cys184.

This sequence belongs to the ROK (NagC/XylR) family. NagK subfamily.

The enzyme catalyses N-acetyl-D-glucosamine + ATP = N-acetyl-D-glucosamine 6-phosphate + ADP + H(+). The protein operates within cell wall biogenesis; peptidoglycan recycling. Functionally, catalyzes the phosphorylation of N-acetyl-D-glucosamine (GlcNAc) derived from cell-wall degradation, yielding GlcNAc-6-P. The sequence is that of N-acetyl-D-glucosamine kinase from Salmonella heidelberg (strain SL476).